The primary structure comprises 178 residues: Large ribosomal subunit protein uL10 (178 aa).

It belongs to the universal ribosomal protein uL10 family. Part of the ribosomal stalk of the 50S ribosomal subunit. The N-terminus interacts with L11 and the large rRNA to form the base of the stalk. The C-terminus forms an elongated spine to which L12 dimers bind in a sequential fashion forming a multimeric L10(L12)X complex.

Its function is as follows. Forms part of the ribosomal stalk, playing a central role in the interaction of the ribosome with GTP-bound translation factors. This chain is Large ribosomal subunit protein uL10, found in Albidiferax ferrireducens (strain ATCC BAA-621 / DSM 15236 / T118) (Rhodoferax ferrireducens).